We begin with the raw amino-acid sequence, 1212 residues long: uncharacterized protein (1212 aa).

A disordered region spans residues 783-802 (TRQDASGGSSSGTKKGEKLQ).

This is an uncharacterized protein from Human herpesvirus 6B (strain Z29) (HHV-6 variant B).